A 321-amino-acid polypeptide reads, in one-letter code: Trem-like transcript 2 protein (321 aa).

The first 18 residues, 1–18 (MAPAFLLLLLLWPQGCVS), serve as a signal peptide directing secretion. Residues 19-268 (GPSADSVYTK…PSIRHQDVYS (250 aa)) lie on the Extracellular side of the membrane. The 102-residue stretch at 20–121 (PSADSVYTKV…ILYPLMGFQL (102 aa)) folds into the Ig-like V-type domain. 2 cysteine pairs are disulfide-bonded: Cys41-Cys105 and Cys56-Cys63. An N-linked (GlcNAc...) asparagine glycan is attached at Asn89. Polar residues-rich tracts occupy residues 189–220 (GYSF…NARD) and 227–241 (SIST…RSPT). A disordered region spans residues 189 to 241 (GYSFTATSTTSQGPRRTMGSQTVTASPSNARDSSAGPESISTKSGDLSTRSPT). A helical transmembrane segment spans residues 269 to 289 (TVLGVVLTLLVLMLIMVYGFW). Topologically, residues 290 to 321 (KKRHMASYSMCSDPSTRDPPGRPEPYVEVYLI) are cytoplasmic.

In terms of assembly, interacts with CD276 and this interaction enhances T-cell activation. Detected in cultured B-cells, T-cell leukemia and monocyte leukemia. Expressed constitutively on CD8 T-cells and induced on CD4 T-cells after activation.

Its subcellular location is the cell membrane. Functionally, cell surface receptor that may play a role in the innate and adaptive immune response. Acts as a counter-receptor for CD276 and interaction with CD276 on T-cells enhances T-cell activation. In Homo sapiens (Human), this protein is Trem-like transcript 2 protein (TREML2).